Consider the following 624-residue polypeptide: Kelch-like ECH-associated protein 1 (624 aa).

Residue Cys-38 is modified to S-(2-succinyl)cysteine. Residues 77–149 (CDVTLQVKYE…AYTASISVGE (73 aa)) form the BTB domain. An N5-[4-(S-L-cysteinyl)-5-methyl-1H-imidazol-2-yl]-L-ornithine (Arg-Cys) (interchain with C-151 in KEAP1) cross-link involves residue Arg-135. S-(2,3-dicarboxypropyl)cysteine; alternate is present on Cys-151. Cys-151 bears the S-(2-succinyl)cysteine; alternate mark. At Cys-151 the chain carries S-nitrosocysteine; alternate. An N5-[4-(S-L-cysteinyl)-5-methyl-1H-imidazol-2-yl]-L-ornithine (Cys-Arg) (interchain with R-135 in KEAP1) cross-link involves residue Cys-151. The 103-residue stretch at 184–286 (AIGIANFAEQ…TPRFLQTQLQ (103 aa)) folds into the BACK domain. Cys-241 is modified (S-(2-succinyl)cysteine). 2 positions are modified to S-(2,3-dicarboxypropyl)cysteine: Cys-257 and Cys-273. Cys-288 bears the S-(2,3-dicarboxypropyl)cysteine; alternate mark. Cys-288 is subject to S-(2-succinyl)cysteine; alternate. S-(2-succinyl)cysteine is present on Cys-319. Kelch repeat units follow at residues 327-372 (LIYT…VVGG), 373-423 (LLYA…VIDG), 424-470 (HIYA…VLNR), 471-517 (LLYA…VLHN), 519-564 (IYAA…VHQG), and 565-611 (KIYV…VTME). Cys-434 carries the S-cGMP-cysteine modification. Residue Cys-613 is modified to S-(2-succinyl)cysteine.

It belongs to the KEAP1 family. As to quaternary structure, component of the BCR(KEAP1) E3 ubiquitin ligase complex, at least composed of 2 molecules of CUL3, 2 molecules of KEAP1, and RBX1. Interacts with NFE2L2/NRF2; the interaction is direct. Forms a ternary complex with NFE2L2/NRF2 and PGAM5. Interacts with (phosphorylated) SQSTM1/p62; the interaction is direct and inactivates the BCR(KEAP1) complex by sequestering it in inclusion bodies, promoting its degradation. Interacts with NFE2L1. Interacts with BPTF and PTMA. Interacts with MAP1LC3B. Interacts indirectly with ENC1. Interacts with SESN1 and SESN2. Interacts with HSP90AA1 and HSP90AB1. Interacts with PGCKA1; this interaction prevents the ubiquitination of KEAP1 by TRIM25, thus protecting KEAP1 from degradation. Non-enzymatic covalent modifications of reactive cysteines by electrophile metabolites inactivate the BCR(KEAP1) complex. Accumulation of fumarate promotes the formation of cysteine S-succination (S-(2-succinyl)cysteine), leading to inactivate the BCR(KEAP1) complex and promote NFE2L2/NRF2 nuclear accumulation and activation. Nitric oxide-dependent 8-Nitro-cGMP formation promotes cysteine guanylation (S-cGMP-cysteine), leading to NFE2L2/NRF2 nuclear accumulation and activation. Itaconate, an anti-inflammatory metabolite generated in response to lipopolysaccharide, alkylates cysteines, activating NFE2L2/NRF2. Methylglyoxal, a reactive metabolite that accumulates when the glycolytic enzyme PGK1 is inhibited, promotes formation of a methylimidazole cross-link between proximal Cys-151 and Arg-135 on another KEAP1 molecule, resulting in an inactive dimer that inactivates the BCR(KEAP1) complex. In terms of processing, degraded via a proteasomal-independent process during selective autophagy: interaction with phosphorylated SQSTM1/p62 sequesters KEAP1 in inclusion bodies, leading to its degradation. Post-translationally, auto-ubiquitinated by the BCR(KEAP1) complex. Quinone-induced oxidative stress, but not sulforaphane, increases its ubiquitination. Ubiquitination and subsequent degradation is most pronounced following prolonged exposure of cells to oxidative stress, particularly in glutathione-deficient cells that are highly susceptible to oxidative stress. Deubiquitinated by USP25; leading to stabilization. Ubiquitinated by TRIM25; leading to degradation upon ER stress.

The protein resides in the cytoplasm. It is found in the nucleus. Its pathway is protein modification; protein ubiquitination. Ubiquitin ligase activity of the BCR(KEAP1) complex is inhibited by oxidative stress and electrophile metabolites such as sulforaphane. Electrophile metabolites react with reactive cysteine residues in KEAP1 and trigger non-enzymatic covalent modifications of these cysteine residues, leading to inactivate the ubiquitin ligase activity of the BCR(KEAP1) complex. Selective autophagy also inactivates the BCR(KEAP1) complex via interaction between KEAP1 and SQSTM1/p62, which sequesters the complex in inclusion bodies and promotes its degradation. Substrate-specific adapter of a BCR (BTB-CUL3-RBX1) E3 ubiquitin ligase complex that regulates the response to oxidative stress by targeting NFE2L2/NRF2 for ubiquitination. KEAP1 acts as a key sensor of oxidative and electrophilic stress: in normal conditions, the BCR(KEAP1) complex mediates ubiquitination and degradation of NFE2L2/NRF2, a transcription factor regulating expression of many cytoprotective genes. In response to oxidative stress, different electrophile metabolites trigger non-enzymatic covalent modifications of highly reactive cysteine residues in KEAP1, leading to inactivate the ubiquitin ligase activity of the BCR(KEAP1) complex, promoting NFE2L2/NRF2 nuclear accumulation and expression of phase II detoxifying enzymes. In response to selective autophagy, KEAP1 is sequestered in inclusion bodies following its interaction with SQSTM1/p62, leading to inactivation of the BCR(KEAP1) complex and activation of NFE2L2/NRF2. The BCR(KEAP1) complex also mediates ubiquitination of SQSTM1/p62, increasing SQSTM1/p62 sequestering activity and degradation. The BCR(KEAP1) complex also targets BPTF and PGAM5 for ubiquitination and degradation by the proteasome. In Mus musculus (Mouse), this protein is Kelch-like ECH-associated protein 1.